A 542-amino-acid chain; its full sequence is MTRFIFITGGVVSSLGKGLASAALGALLQARGYKVRLRKLDPYLNVDPGTMSPTQHGEVFVTDDGAETDLDLGHYERFTGVSARRSDNVTTGRIYSDVIARERRGDYLGKTVQVIPHVTDAIKEFATADLTDEDFVLCEIGGTVGDIESLPFLEAIRQLRNEMGAERSLIIHLTLLPYIPSAGELKTKPTQHSVKELLGLGIQPDLLMCRSDRPIPEAERNKISLFCNVRREAVIPALDVDTIYQVPVSYHAQGLDVQVCRHFHLPMNEDLDLTRWQTIVDRVRHPEGEVTIAVVGKYTSLIDSYKSLAEALVHGGIANAVKVKLVWLDSEIFEREDAVHYLEGVNGILVPGGFGERGSEGKIEAARFARERSVPYFGICFGMQMAVIEFARHVAGLPGASSSEFGVPEVPLVGLMTEWVRGNERVARGSGDDLGGTMRLGAYECHLRALSKVREIYGAEVIHERHRHRYEVNVTFKDQLEEKGLAFSGMSPDGVLPEIVELPDHPWFIGVQFHPELKSKPFDPHPLFTSFVQAAITQSRLV.

The segment at 1 to 265 (MTRFIFITGG…DVQVCRHFHL (265 aa)) is amidoligase domain. Serine 13 contacts CTP. Serine 13 contacts UTP. Residues 14–19 (SLGKGL) and aspartate 71 each bind ATP. Positions 71 and 139 each coordinate Mg(2+). CTP is bound by residues 146 to 148 (DIE), 186 to 191 (KTKPTQ), and lysine 222. Residues 186 to 191 (KTKPTQ) and lysine 222 each bind UTP. The 251-residue stretch at 291–541 (TIAVVGKYTS…VQAAITQSRL (251 aa)) folds into the Glutamine amidotransferase type-1 domain. Glycine 353 serves as a coordination point for L-glutamine. The active-site Nucleophile; for glutamine hydrolysis is the cysteine 380. Residues 381–384 (FGMQ), glutamate 404, and arginine 469 contribute to the L-glutamine site. Active-site residues include histidine 514 and glutamate 516.

It belongs to the CTP synthase family. Homotetramer.

It carries out the reaction UTP + L-glutamine + ATP + H2O = CTP + L-glutamate + ADP + phosphate + 2 H(+). It catalyses the reaction L-glutamine + H2O = L-glutamate + NH4(+). The catalysed reaction is UTP + NH4(+) + ATP = CTP + ADP + phosphate + 2 H(+). Its pathway is pyrimidine metabolism; CTP biosynthesis via de novo pathway; CTP from UDP: step 2/2. Allosterically activated by GTP, when glutamine is the substrate; GTP has no effect on the reaction when ammonia is the substrate. The allosteric effector GTP functions by stabilizing the protein conformation that binds the tetrahedral intermediate(s) formed during glutamine hydrolysis. Inhibited by the product CTP, via allosteric rather than competitive inhibition. Its function is as follows. Catalyzes the ATP-dependent amination of UTP to CTP with either L-glutamine or ammonia as the source of nitrogen. Regulates intracellular CTP levels through interactions with the four ribonucleotide triphosphates. This is CTP synthase from Rhodospirillum rubrum (strain ATCC 11170 / ATH 1.1.1 / DSM 467 / LMG 4362 / NCIMB 8255 / S1).